Consider the following 548-residue polypeptide: Aspergilol synthase AuAP450 (548 aa).

The helical transmembrane segment at 38–58 (PQLVITTLGALLLAAFYLLPS) threads the bilayer. A heme-binding site is contributed by Cys489.

Belongs to the cytochrome P450 family. It depends on heme as a cofactor.

It is found in the membrane. Its pathway is secondary metabolite biosynthesis; terpenoid biosynthesis. Functionally, cytochrome P450 monooxygenase; part of the gene cluster that mediates the biosynthesis of aspergiltriene A, aspergildienes A-D and aspergilols A-D. The bifunctional terpene synthase AuAS converts DMAPP and IPP into sesterterpenes. The C-terminal prenyltransferase (PT) domain of AuAS catalyzes formation of GFPP, whereas the N-terminal terpene cyclase (TC) domain catalyzes the cyclization of GFPP into 5 distinct sesterterpenes: aspergiltriene A, aspergildiene A, aspergildiene B, aspergildiene C and aspergildiene D. The cytochrome P450 monooxygenase AP450 then hydroxylates the aspergildienes A, B, C and D to yield the corresponding sesterterpene alcohols, aspergilols A-D. This chain is Aspergilol synthase AuAP450, found in Aspergillus ustus.